The chain runs to 358 residues: Serine/threonine-protein phosphatase 2A activator 2 (358 aa).

This sequence belongs to the PTPA-type PPIase family.

The protein localises to the cytoplasm. It catalyses the reaction [protein]-peptidylproline (omega=180) = [protein]-peptidylproline (omega=0). Functionally, PPIases accelerate the folding of proteins. It catalyzes the cis-trans isomerization of proline imidic peptide bonds in oligopeptides. Acts as a regulatory subunit for PP2A-like phosphatases modulating their activity or substrate specificity, probably by inducing a conformational change in the catalytic subunit, a direct target of the PPIase. Can reactivate inactive phosphatase PP2A-phosphatase methylesterase complexes (PP2Ai) in presence of ATP and Mg(2+) by dissociating the inactive form from the complex. This chain is Serine/threonine-protein phosphatase 2A activator 2 (RRD2), found in Candida albicans (strain SC5314 / ATCC MYA-2876) (Yeast).